The sequence spans 243 residues: Type II restriction enzyme NlaIV (243 aa).

The catalysed reaction is Endonucleolytic cleavage of DNA to give specific double-stranded fragments with terminal 5'-phosphates.. In terms of biological role, a P subtype restriction enzyme that recognizes the double-stranded sequence 5'-GGNNCC-3' and cleaves after N-3. The sequence is that of Type II restriction enzyme NlaIV (nlaIVR) from Neisseria lactamica.